The following is a 130-amino-acid chain: Guanyl-specific ribonuclease T1 (130 aa).

The signal sequence occupies residues 1–26 (MMYSKLLTLTTLLLPTALALPSLVER). 2 disulfide bridges follow: Cys-28–Cys-36 and Cys-32–Cys-129. Residue His-66 is part of the active site. The active-site Proton acceptor is Glu-84. The active-site Proton donor is His-118.

It belongs to the ribonuclease N1/T1 family. In terms of assembly, monomer.

The enzyme catalyses [RNA] containing guanosine + H2O = an [RNA fragment]-3'-guanosine-3'-phosphate + a 5'-hydroxy-ribonucleotide-3'-[RNA fragment].. The protein is Guanyl-specific ribonuclease T1 (rntA) of Aspergillus oryzae (strain ATCC 42149 / RIB 40) (Yellow koji mold).